Consider the following 1642-residue polypeptide: Cholesterol transporter ABCA5 (1642 aa).

The helical transmembrane segment at 32-52 (SVQEILFPLFFLFWLILVSMM) threads the bilayer. N-linked (GlcNAc...) asparagine glycosylation is present at asparagine 86. Helical transmembrane passes span 220–240 (VILIYLVIAFSPFGYFLAIHI), 264–284 (LSWVLLYASLIFLMSLLMAVI), 297–317 (IVIFLLFFLYGLSSVFFALML), 328–348 (GVVEFFVTVVFGFVGLLIVLI), and 355–375 (LVWLFSPLCQCAFLIGIAQVM). A glycan (N-linked (GlcNAc...) asparagine) is linked at asparagine 388. A helical membrane pass occupies residues 396-416 (LIITIIMLALDSVFYVLLAVY). Asparagine 458 is a glycosylation site (N-linked (GlcNAc...) asparagine). The region spanning 478 to 713 (IRISGIQKSY…WGIGYRLSMY (236 aa)) is the ABC transporter 1 domain. ATP is bound at residue 514–521 (GHSGTGKS). The helical transmembrane segment at 864–884 (AVLLLLLIFFAVQIFMFFLHH) threads the bilayer. The N-linked (GlcNAc...) asparagine glycan is linked to asparagine 919. Residues 967–987 (VFSAVFNSTMVYCLPVMMNII) form a helical membrane-spanning segment. Asparagine 996 is a glycosylation site (N-linked (GlcNAc...) asparagine). 6 consecutive transmembrane segments (helical) span residues 1021 to 1041 (LYFQAALLGIIVTAMPPYFAM), 1071 to 1091 (VVDIPLFFVVLILMLGSLFAF), 1102 to 1122 (FLAVVFCLIAYVPSVILFTYI), 1138 to 1158 (SFIYSVTALACVAITETTFFL), 1164 to 1184 (AVFHYTFCIAIPIYPLLGCLI), and 1207 to 1227 (LLVAVIMPYLQCILWIFLLQH). An ABC transporter 2 domain is found at 1290 to 1533 (IMVCNLHKEY…FGKGYFLEIK (244 aa)). An ATP-binding site is contributed by 1333–1340 (GPNGAGKS).

The protein belongs to the ABC transporter superfamily. ABCA family. N-glycosylated. In terms of tissue distribution, expressed in cardiomyocytes, oligodendrocytes and astrocytes in brain, alveolar type 2 cells in lung and follicular cells in the thyroid gland (at protein level). Detected in brain, testis, lung, heart, liver, kidney, skeletal muscle and placenta. Strongly expressed in the basal cells of the seminiferous tubules, interstitial cells consisting of Leydig cells, as well as the tunica albuginea. In the epididymis, specifically and very strongly expressed in the connective tissue outlining the cylindrical epithelium in the corpus and cauda regions, including fibrocytes and smooth muscle cells, as well as within the basal and tall columnar cells of the corpus cylindrical epithelium. Highly expressed in the brain with high expression in cortical and hippocampal neurons and moderately in the lung.

The protein resides in the golgi apparatus membrane. It localises to the lysosome membrane. The protein localises to the late endosome membrane. It is found in the cell membrane. The enzyme catalyses cholesterol(in) + ATP + H2O = cholesterol(out) + ADP + phosphate + H(+). Cholesterol efflux transporter in macrophages that is responsible for APOAI/high-density lipoproteins (HDL) formation at the plasma membrane under high cholesterol levels and participates in reverse cholesterol transport. May play a role in the processing of autolysosomes. The sequence is that of Cholesterol transporter ABCA5 from Mus musculus (Mouse).